Consider the following 444-residue polypeptide: ATP-dependent protease ATPase subunit HslU (444 aa).

ATP contacts are provided by residues Ile20 and 62–67 (GVGKTE). Positions 130 to 158 (EDRILDALVPPPRGASGEPERGEDNSARQ) are disordered. Positions 257, 322, and 394 each coordinate ATP.

It belongs to the ClpX chaperone family. HslU subfamily. A double ring-shaped homohexamer of HslV is capped on each side by a ring-shaped HslU homohexamer. The assembly of the HslU/HslV complex is dependent on binding of ATP.

Its subcellular location is the cytoplasm. ATPase subunit of a proteasome-like degradation complex; this subunit has chaperone activity. The binding of ATP and its subsequent hydrolysis by HslU are essential for unfolding of protein substrates subsequently hydrolyzed by HslV. HslU recognizes the N-terminal part of its protein substrates and unfolds these before they are guided to HslV for hydrolysis. This Bordetella pertussis (strain Tohama I / ATCC BAA-589 / NCTC 13251) protein is ATP-dependent protease ATPase subunit HslU.